The chain runs to 449 residues: Alginate biosynthesis transcriptional regulatory protein AlgB (449 aa).

The Response regulatory domain maps to 10 to 124 (RILLVDDESA…QLRLAAAKQL (115 aa)). Asp-59 carries the 4-aspartylphosphate modification. In terms of domain architecture, Sigma-54 factor interaction spans 147–376 (LESHSPAMAA…LRNVIERASI (230 aa)). ATP-binding positions include 175–182 (GESGSGKG) and 238–247 (ADGGTLFLDE). Positions 426 to 445 (LDQAAKTLGIDASTLYRKRK) form a DNA-binding region, H-T-H motif.

In terms of processing, phosphorylated by KinB.

The protein operates within glycan biosynthesis; alginate biosynthesis [regulation]. Functionally, member of the two-component regulatory system AlgB/KinB involved in regulation of alginate biosynthesis genes. Positive regulator of the alginate biosynthetic gene AlgD. The sequence is that of Alginate biosynthesis transcriptional regulatory protein AlgB (algB) from Pseudomonas aeruginosa (strain ATCC 15692 / DSM 22644 / CIP 104116 / JCM 14847 / LMG 12228 / 1C / PRS 101 / PAO1).